Reading from the N-terminus, the 32-residue chain is U21-ctenitoxin-Co1a (32 aa).

Cystine bridges form between Cys3/Cys17, Cys10/Cys21, and Cys16/Cys30.

In terms of tissue distribution, expressed by the venom gland.

Its subcellular location is the secreted. In terms of biological role, not toxic to mice by intracerebroventricular injection. In Ctenus ornatus (Brazilian spider), this protein is U21-ctenitoxin-Co1a.